The sequence spans 528 residues: tRNA-2-methylthio-N(6)-dimethylallyladenosine synthase (528 aa).

The 116-residue stretch at 19–134 (RTYEVRTYGC…LPTLLERARH (116 aa)) folds into the MTTase N-terminal domain. C28, C63, C97, C171, C175, and C178 together coordinate [4Fe-4S] cluster. The Radical SAM core domain maps to 157-387 (RDEIASGWVS…TALQERISHE (231 aa)). The 71-residue stretch at 390–460 (QRVVGRTVEV…PFHLIADSVD (71 aa)) folds into the TRAM domain.

This sequence belongs to the methylthiotransferase family. MiaB subfamily. As to quaternary structure, monomer. [4Fe-4S] cluster is required as a cofactor.

Its subcellular location is the cytoplasm. The enzyme catalyses N(6)-dimethylallyladenosine(37) in tRNA + (sulfur carrier)-SH + AH2 + 2 S-adenosyl-L-methionine = 2-methylsulfanyl-N(6)-dimethylallyladenosine(37) in tRNA + (sulfur carrier)-H + 5'-deoxyadenosine + L-methionine + A + S-adenosyl-L-homocysteine + 2 H(+). In terms of biological role, catalyzes the methylthiolation of N6-(dimethylallyl)adenosine (i(6)A), leading to the formation of 2-methylthio-N6-(dimethylallyl)adenosine (ms(2)i(6)A) at position 37 in tRNAs that read codons beginning with uridine. The protein is tRNA-2-methylthio-N(6)-dimethylallyladenosine synthase of Clavibacter michiganensis subsp. michiganensis (strain NCPPB 382).